The primary structure comprises 316 residues: Acetyl-coenzyme A carboxylase carboxyl transferase subunit alpha (316 aa).

The 255-residue stretch at 39–293 (RLQDKSKALT…RGELLAQLKM (255 aa)) folds into the CoA carboxyltransferase C-terminal domain.

Belongs to the AccA family. As to quaternary structure, acetyl-CoA carboxylase is a heterohexamer composed of biotin carboxyl carrier protein (AccB), biotin carboxylase (AccC) and two subunits each of ACCase subunit alpha (AccA) and ACCase subunit beta (AccD).

It is found in the cytoplasm. It catalyses the reaction N(6)-carboxybiotinyl-L-lysyl-[protein] + acetyl-CoA = N(6)-biotinyl-L-lysyl-[protein] + malonyl-CoA. Its pathway is lipid metabolism; malonyl-CoA biosynthesis; malonyl-CoA from acetyl-CoA: step 1/1. Functionally, component of the acetyl coenzyme A carboxylase (ACC) complex. First, biotin carboxylase catalyzes the carboxylation of biotin on its carrier protein (BCCP) and then the CO(2) group is transferred by the carboxyltransferase to acetyl-CoA to form malonyl-CoA. In Pseudomonas aeruginosa (strain UCBPP-PA14), this protein is Acetyl-coenzyme A carboxylase carboxyl transferase subunit alpha.